We begin with the raw amino-acid sequence, 270 residues long: Cytochrome c oxidase subunit 3 (270 aa).

Helical transmembrane passes span 21-41 (PWPFVASFSALIILLGGVLYF), 46-66 (GSLVILFFGIFFLLLIIFVWW), 90-110 (GIMLFIFSEVILFIAFFWAFF), 131-151 (FFSPWDIPFLNTIILLLSGCA), 167-187 (AIFSLILTIGLALIFTIFQIY), 205-225 (FFMITGLHGFHVIVGTFFLFV), and 248-268 (WYWHFVDVVWLFLFVSIYWWG).

It belongs to the cytochrome c oxidase subunit 3 family. As to quaternary structure, component of the cytochrome c oxidase (complex IV, CIV), a multisubunit enzyme composed of a catalytic core of 3 subunits and several supernumerary subunits. The complex exists as a monomer or a dimer and forms supercomplexes (SCs) in the inner mitochondrial membrane with ubiquinol-cytochrome c oxidoreductase (cytochrome b-c1 complex, complex III, CIII).

It localises to the mitochondrion inner membrane. The enzyme catalyses 4 Fe(II)-[cytochrome c] + O2 + 8 H(+)(in) = 4 Fe(III)-[cytochrome c] + 2 H2O + 4 H(+)(out). Functionally, component of the cytochrome c oxidase, the last enzyme in the mitochondrial electron transport chain which drives oxidative phosphorylation. The respiratory chain contains 3 multisubunit complexes succinate dehydrogenase (complex II, CII), ubiquinol-cytochrome c oxidoreductase (cytochrome b-c1 complex, complex III, CIII) and cytochrome c oxidase (complex IV, CIV), that cooperate to transfer electrons derived from NADH and succinate to molecular oxygen, creating an electrochemical gradient over the inner membrane that drives transmembrane transport and the ATP synthase. Cytochrome c oxidase is the component of the respiratory chain that catalyzes the reduction of oxygen to water. Electrons originating from reduced cytochrome c in the intermembrane space (IMS) are transferred via the dinuclear copper A center (CU(A)) of subunit 2 and heme A of subunit 1 to the active site in subunit 1, a binuclear center (BNC) formed by heme A3 and copper B (CU(B)). The BNC reduces molecular oxygen to 2 water molecules using 4 electrons from cytochrome c in the IMS and 4 protons from the mitochondrial matrix. The protein is Cytochrome c oxidase subunit 3 (COX3) of Cyanidium caldarium (Red alga).